Reading from the N-terminus, the 121-residue chain is Large ribosomal subunit protein bL12 (121 aa).

It belongs to the bacterial ribosomal protein bL12 family. As to quaternary structure, homodimer. Part of the ribosomal stalk of the 50S ribosomal subunit. Forms a multimeric L10(L12)X complex, where L10 forms an elongated spine to which 2 to 4 L12 dimers bind in a sequential fashion. Binds GTP-bound translation factors.

In terms of biological role, forms part of the ribosomal stalk which helps the ribosome interact with GTP-bound translation factors. Is thus essential for accurate translation. The protein is Large ribosomal subunit protein bL12 of Bacillus pumilus (strain SAFR-032).